The sequence spans 141 residues: HTH-type transcriptional repressor NsrR (141 aa).

One can recognise an HTH rrf2-type domain in the interval 2-129 (QLTSFTDYGL…DNYTLADMVK (128 aa)). Residues 28 to 51 (ISQVTEVYGVSRNHMVKIINQLSR) constitute a DNA-binding region (H-T-H motif). [2Fe-2S] cluster is bound by residues C91, C96, and C102.

Requires [2Fe-2S] cluster as cofactor.

Nitric oxide-sensitive repressor of genes involved in protecting the cell against nitrosative stress. May require iron for activity. The sequence is that of HTH-type transcriptional repressor NsrR from Yersinia pseudotuberculosis serotype O:1b (strain IP 31758).